Here is a 413-residue protein sequence, read N- to C-terminus: Dolichyl-diphosphooligosaccharide--protein glycosyltransferase 48 kDa subunit (413 aa).

Topologically, residues 1–383 (GPRSLVLLEN…QYERFIPSAY (383 aa)) are lumenal. A helical membrane pass occupies residues 384–404 (PYYAGAFSMMVGLFMFSIVFL). Residues 405–413 (HMKEKEKSD) lie on the Cytoplasmic side of the membrane.

This sequence belongs to the DDOST 48 kDa subunit family. Component of the oligosaccharyltransferase (OST) complex.

It localises to the endoplasmic reticulum. The protein resides in the endoplasmic reticulum membrane. It functions in the pathway protein modification; protein glycosylation. Functionally, subunit of the oligosaccharyl transferase (OST) complex that catalyzes the initial transfer of a defined glycan (Glc(3)Man(9)GlcNAc(2) in eukaryotes) from the lipid carrier dolichol-pyrophosphate to an asparagine residue within an Asn-X-Ser/Thr consensus motif in nascent polypeptide chains, the first step in protein N-glycosylation. N-glycosylation occurs cotranslationally and the complex associates with the Sec61 complex at the channel-forming translocon complex that mediates protein translocation across the endoplasmic reticulum (ER). All subunits are required for a maximal enzyme activity. Required for the assembly of both SST3A- and SS3B-containing OST complexes. The chain is Dolichyl-diphosphooligosaccharide--protein glycosyltransferase 48 kDa subunit from Gallus gallus (Chicken).